We begin with the raw amino-acid sequence, 185 residues long: Ribosome-recycling factor (185 aa).

It belongs to the RRF family.

Its subcellular location is the cytoplasm. Its function is as follows. Responsible for the release of ribosomes from messenger RNA at the termination of protein biosynthesis. May increase the efficiency of translation by recycling ribosomes from one round of translation to another. In Geobacillus thermodenitrificans (strain NG80-2), this protein is Ribosome-recycling factor.